We begin with the raw amino-acid sequence, 116 residues long: Large ribosomal subunit protein bL19 (116 aa).

This sequence belongs to the bacterial ribosomal protein bL19 family.

Functionally, this protein is located at the 30S-50S ribosomal subunit interface and may play a role in the structure and function of the aminoacyl-tRNA binding site. This is Large ribosomal subunit protein bL19 from Clostridium beijerinckii (strain ATCC 51743 / NCIMB 8052) (Clostridium acetobutylicum).